We begin with the raw amino-acid sequence, 466 residues long: MKKNENAHKKMWEGRFSEASSKLLEEFNASINFDKNLFEEDIAGSKAHAKMLGICGILKKDESEAIIKGLDEVLAEIRAGKFAFKIEDEDIHMAVEKRLSQIIGAELGGRLHTARSRNDQVALDFKFYVLKKNLEISSLIKELIATLTNLAKNHKDTLMPGYTHFQHAQPVSLSYHLLAYAFMFKRDFERFVSSYERNNLSPLGSAALAGTPHKIDRSIVASELGFADCTQNAMDSVSDRDYALEILFNISVFMTHASRLCEELILWSSQEFGFVSISDAYSTGSSIMPQKKNPDVAELIRGKTGRVNGNLVALLTTMKGLPLAYNKDMQEDKEGVFDSVATILSSATILNEMIKTAKFNEKNMLKATKTGHLSATDLADYLVREKNIPFRTAHFITGKAVAKAESLGLDLSELNKEQLKSVDENLDENAIKFLDLHASKEARTSKGGTANKSVEEQIQILDDWLK.

Belongs to the lyase 1 family. Argininosuccinate lyase subfamily.

It localises to the cytoplasm. The enzyme catalyses 2-(N(omega)-L-arginino)succinate = fumarate + L-arginine. Its pathway is amino-acid biosynthesis; L-arginine biosynthesis; L-arginine from L-ornithine and carbamoyl phosphate: step 3/3. This is Argininosuccinate lyase from Campylobacter concisus (strain 13826).